The chain runs to 267 residues: Transcription factor HES-1-A (267 aa).

The disordered stretch occupies residues 1 to 43 (MPADVMEKNSSSPVAATPASVSNTPDKPKTASEHRKSSKPIME). The span at 10 to 22 (SSSPVAATPASVS) shows a compositional bias: low complexity. Residues 26–35 (DKPKTASEHR) are compositionally biased toward basic and acidic residues. The 58-residue stretch at 34–91 (HRKSSKPIMEKRRRARINESLGQLKTLILDALKKDSSRHSKLEKADILEMTVKHLRNL) folds into the bHLH domain. In terms of domain architecture, Orange spans 110-143 (YRAGFSECMNEVTRFLSTCEGVNTDVRTRLLGHL). The WRPW motif motif lies at 264–267 (WRPW).

As to quaternary structure, transcription repression requires formation of a complex with a corepressor protein of the Groucho/TLE family. Interacts with the bHLH protein hes2, and binds DNA in the form of a heterodimer with the bHLH protein hey1/hrt1. Interacts with the bHLH protein hes6; this interaction may inhibit the transcriptional repressor activity. As to expression, starting from late neurula stage, weakly expressed in midline neural cells, where expression is restricted to the superficial layer of the prospective floorplate. Expressed in the posterior somitic mesoderm (PSM) at tailbud stage. During early tailbud stages, broadly expressed within the pronephric mesoderm both around and inside the developing pronephros. During late tailbud to early tadpole stages, expressed more ventrally in the pronephros, and although initially expressed in both the lateral and medial layers, by these later stages expression is predominantly in the lateral layer. Pronephric expression is no longer detectable in late tadpoles (stage 35).

It localises to the nucleus. Its function is as follows. Transcriptional repressor of a subset of early mesodermal genes including myod1 and t/bra. Binds DNA on N-box motifs: 5'-CACNAG-3'. Acts as a negative regulator of myogenesis, mediating Notch signaling to repress expression of myod1. The sequence is that of Transcription factor HES-1-A (hes1-a) from Xenopus laevis (African clawed frog).